Reading from the N-terminus, the 341-residue chain is Undecaprenyl-phosphate 4-deoxy-4-formamido-L-arabinose transferase (341 aa).

The next 2 membrane-spanning stretches (helical) occupy residues 235 to 255 and 269 to 289; these read LSIV…ALIV and LFVL…GMGL.

It belongs to the glycosyltransferase 2 family.

It is found in the cell inner membrane. It catalyses the reaction UDP-4-deoxy-4-formamido-beta-L-arabinose + di-trans,octa-cis-undecaprenyl phosphate = 4-deoxy-4-formamido-alpha-L-arabinopyranosyl di-trans,octa-cis-undecaprenyl phosphate + UDP. Its pathway is glycolipid biosynthesis; 4-amino-4-deoxy-alpha-L-arabinose undecaprenyl phosphate biosynthesis; 4-amino-4-deoxy-alpha-L-arabinose undecaprenyl phosphate from UDP-4-deoxy-4-formamido-beta-L-arabinose and undecaprenyl phosphate: step 1/2. It functions in the pathway bacterial outer membrane biogenesis; lipopolysaccharide biosynthesis. In terms of biological role, catalyzes the transfer of 4-deoxy-4-formamido-L-arabinose from UDP to undecaprenyl phosphate. The modified arabinose is attached to lipid A and is required for resistance to polymyxin and cationic antimicrobial peptides. This is Undecaprenyl-phosphate 4-deoxy-4-formamido-L-arabinose transferase from Pseudomonas fluorescens (strain SBW25).